A 638-amino-acid chain; its full sequence is 1-deoxy-D-xylulose-5-phosphate synthase (638 aa).

Thiamine diphosphate contacts are provided by residues H72 and 113–115; that span reads GHA. D144 is a binding site for Mg(2+). Residues 145–146, N174, Y287, and E370 contribute to the thiamine diphosphate site; that span reads GA. N174 contacts Mg(2+).

It belongs to the transketolase family. DXPS subfamily. In terms of assembly, homodimer. Mg(2+) serves as cofactor. It depends on thiamine diphosphate as a cofactor.

The catalysed reaction is D-glyceraldehyde 3-phosphate + pyruvate + H(+) = 1-deoxy-D-xylulose 5-phosphate + CO2. It functions in the pathway metabolic intermediate biosynthesis; 1-deoxy-D-xylulose 5-phosphate biosynthesis; 1-deoxy-D-xylulose 5-phosphate from D-glyceraldehyde 3-phosphate and pyruvate: step 1/1. Functionally, catalyzes the acyloin condensation reaction between C atoms 2 and 3 of pyruvate and glyceraldehyde 3-phosphate to yield 1-deoxy-D-xylulose-5-phosphate (DXP). The sequence is that of 1-deoxy-D-xylulose-5-phosphate synthase from Picosynechococcus sp. (strain ATCC 27264 / PCC 7002 / PR-6) (Agmenellum quadruplicatum).